Here is a 218-residue protein sequence, read N- to C-terminus: uncharacterized protein (218 aa).

One can recognise an ACT domain in the interval 4 to 83 (GISIEAENKV…IHSSLKKIYG (80 aa)).

This is an uncharacterized protein from Methanocaldococcus jannaschii (strain ATCC 43067 / DSM 2661 / JAL-1 / JCM 10045 / NBRC 100440) (Methanococcus jannaschii).